The chain runs to 876 residues: Alanine--tRNA ligase (876 aa).

4 residues coordinate Zn(2+): His-564, His-568, Cys-666, and His-670.

The protein belongs to the class-II aminoacyl-tRNA synthetase family. As to quaternary structure, homotetramer. Zn(2+) is required as a cofactor.

The protein resides in the cytoplasm. It catalyses the reaction tRNA(Ala) + L-alanine + ATP = L-alanyl-tRNA(Ala) + AMP + diphosphate. Functionally, catalyzes the attachment of alanine to tRNA(Ala) in a two-step reaction: alanine is first activated by ATP to form Ala-AMP and then transferred to the acceptor end of tRNA(Ala). Also edits incorrectly charged Ser-tRNA(Ala) and Gly-tRNA(Ala) via its editing domain. The chain is Alanine--tRNA ligase from Salmonella typhimurium (strain LT2 / SGSC1412 / ATCC 700720).